A 425-amino-acid polypeptide reads, in one-letter code: Serine--tRNA ligase (425 aa).

231 to 233 (TAE) serves as a coordination point for L-serine. Residue 262–264 (RSE) coordinates ATP. E285 provides a ligand contact to L-serine. 349-352 (EISS) contributes to the ATP binding site. S385 is a binding site for L-serine.

It belongs to the class-II aminoacyl-tRNA synthetase family. Type-1 seryl-tRNA synthetase subfamily. In terms of assembly, homodimer. The tRNA molecule binds across the dimer.

It localises to the cytoplasm. It carries out the reaction tRNA(Ser) + L-serine + ATP = L-seryl-tRNA(Ser) + AMP + diphosphate + H(+). The enzyme catalyses tRNA(Sec) + L-serine + ATP = L-seryl-tRNA(Sec) + AMP + diphosphate + H(+). It participates in aminoacyl-tRNA biosynthesis; selenocysteinyl-tRNA(Sec) biosynthesis; L-seryl-tRNA(Sec) from L-serine and tRNA(Sec): step 1/1. Its function is as follows. Catalyzes the attachment of serine to tRNA(Ser). Is also able to aminoacylate tRNA(Sec) with serine, to form the misacylated tRNA L-seryl-tRNA(Sec), which will be further converted into selenocysteinyl-tRNA(Sec). This is Serine--tRNA ligase from Bartonella henselae (strain ATCC 49882 / DSM 28221 / CCUG 30454 / Houston 1) (Rochalimaea henselae).